The chain runs to 514 residues: Probable endopolygalacturonase D (514 aa).

Residues 1-16 (MKRCALLTPLLPLALA) form the signal peptide. Residues 134-166 (IKSSSPGPSSSFAAAATTEAPTSTRASPYTPYT) form a disordered region. The span at 136–166 (SSSPGPSSSFAAAATTEAPTSTRASPYTPYT) shows a compositional bias: low complexity. A disulfide bridge links cysteine 173 with cysteine 188. A glycan (N-linked (GlcNAc...) asparagine) is linked at asparagine 240. PbH1 repeat units lie at residues 280 to 302 (VYNS…DIEN), 303 to 341 (TESL…DIKS), 342 to 363 (STDL…AITS), 364 to 384 (GTNI…SIGS), 393 to 414 (VDGV…RIKT), 422 to 444 (VSNI…VVQQ), and 456 to 500 (SNGV…SITG). The segment at 312-335 (TLDNSAGDEPNDSSDGDPAAHNSD) is disordered. Residue asparagine 322 is glycosylated (N-linked (GlcNAc...) asparagine). The Proton donor role is filled by aspartate 356. Cysteine 358 and cysteine 374 are joined by a disulfide. A glycan (N-linked (GlcNAc...) asparagine) is linked at asparagine 366. Histidine 378 is an active-site residue. A glycan (N-linked (GlcNAc...) asparagine) is linked at asparagine 429. The cysteines at positions 483 and 488 are disulfide-linked. The N-linked (GlcNAc...) asparagine glycan is linked to asparagine 490. Cysteine 506 and cysteine 513 are oxidised to a cystine.

This sequence belongs to the glycosyl hydrolase 28 family.

It is found in the secreted. It catalyses the reaction (1,4-alpha-D-galacturonosyl)n+m + H2O = (1,4-alpha-D-galacturonosyl)n + (1,4-alpha-D-galacturonosyl)m.. Involved in maceration and soft-rotting of plant tissue. Hydrolyzes the 1,4-alpha glycosidic bonds of de-esterified pectate in the smooth region of the plant cell wall. In Emericella nidulans (strain FGSC A4 / ATCC 38163 / CBS 112.46 / NRRL 194 / M139) (Aspergillus nidulans), this protein is Probable endopolygalacturonase D (pgaD).